A 715-amino-acid polypeptide reads, in one-letter code: ATP-dependent DNA helicase Hel308 (715 aa).

ATP is bound by residues glutamine 35 and 53–60 (SPTGSGKT). The Helicase ATP-binding domain occupies 40–203 (KKGLLDGNRL…WLGAEPVATN (164 aa)). Residues 152 to 155 (DELH) carry the DEAH box motif. The Helicase C-terminal domain maps to 236 to 442 (HGDDAIIAYT…ERAFYTFLLG (207 aa)).

It belongs to the helicase family. Hel308 subfamily. Monomer. Interacts with PINA ATPase which decreases both DNA helicase activities of this protein.

It carries out the reaction Couples ATP hydrolysis with the unwinding of duplex DNA by translocating in the 3'-5' direction.. The enzyme catalyses ATP + H2O = ADP + phosphate + H(+). The catalysed reaction is Couples ATP hydrolysis with the unwinding of duplex DNA at the replication fork by translocating in the 5'-3' direction. This creates two antiparallel DNA single strands (ssDNA). The leading ssDNA polymer is the template for DNA polymerase III holoenzyme which synthesizes a continuous strand.. PINA inhibits the (weak) 5'-3' but not the 3'-5' helicase activity of this protein on overhang substrates. DNA-dependent ATPase and 3'-5' DNA helicase that may be involved in repair of stalled replication forks. Functionally, has predominantly 3'-5' helicase activity but also a weak 5'-3' helicase activity. Has the ability to unwind replication forks, preferentially removing the lagging strand. Hjc, Hjm (Hel308) and branch migration ATPase PINA coordinate HJ migration and cleavage of replication forks in a coordinated way. This Saccharolobus islandicus (strain REY15A) (Sulfolobus islandicus) protein is ATP-dependent DNA helicase Hel308.